Here is a 400-residue protein sequence, read N- to C-terminus: S-adenosylmethionine synthase (400 aa).

His-17 contributes to the ATP binding site. Asp-19 is a binding site for Mg(2+). A K(+)-binding site is contributed by Glu-45. 2 residues coordinate L-methionine: Glu-58 and Gln-101. The tract at residues 101 to 111 is flexible loop; the sequence is QSPDIAMGVDQ. Residues 177–179, 244–245, Asp-253, 259–260, Ala-276, and Lys-280 contribute to the ATP site; these read DGK, RF, and RK. Asp-253 is an L-methionine binding site. L-methionine is bound at residue Lys-284.

This sequence belongs to the AdoMet synthase family. In terms of assembly, homotetramer; dimer of dimers. The cofactor is Mg(2+). K(+) serves as cofactor.

Its subcellular location is the cytoplasm. The enzyme catalyses L-methionine + ATP + H2O = S-adenosyl-L-methionine + phosphate + diphosphate. Its pathway is amino-acid biosynthesis; S-adenosyl-L-methionine biosynthesis; S-adenosyl-L-methionine from L-methionine: step 1/1. Its function is as follows. Catalyzes the formation of S-adenosylmethionine (AdoMet) from methionine and ATP. The overall synthetic reaction is composed of two sequential steps, AdoMet formation and the subsequent tripolyphosphate hydrolysis which occurs prior to release of AdoMet from the enzyme. The polypeptide is S-adenosylmethionine synthase (Bacillus licheniformis (strain ATCC 14580 / DSM 13 / JCM 2505 / CCUG 7422 / NBRC 12200 / NCIMB 9375 / NCTC 10341 / NRRL NRS-1264 / Gibson 46)).